The sequence spans 189 residues: Transcription factor FapR (189 aa).

The protein belongs to the FapR family.

Its function is as follows. Transcriptional factor involved in regulation of membrane lipid biosynthesis by repressing genes involved in fatty acid and phospholipid metabolism. This chain is Transcription factor FapR, found in Exiguobacterium sp. (strain ATCC BAA-1283 / AT1b).